A 569-amino-acid chain; its full sequence is Urease subunit alpha (569 aa).

Positions 131–569 (GGIDAHIHWI…LPLAQRYFLF (439 aa)) constitute a Urease domain. Ni(2+)-binding residues include H136, H138, and K219. Residue K219 is modified to N6-carboxylysine. H221 lines the substrate pocket. Positions 248 and 274 each coordinate Ni(2+). Residue H322 is the Proton donor of the active site. D362 is a binding site for Ni(2+).

The protein belongs to the metallo-dependent hydrolases superfamily. Urease alpha subunit family. In terms of assembly, heterotrimer of UreA (gamma), UreB (beta) and UreC (alpha) subunits. Three heterotrimers associate to form the active enzyme. Requires Ni cation as cofactor. Carboxylation allows a single lysine to coordinate two nickel ions.

It localises to the cytoplasm. It catalyses the reaction urea + 2 H2O + H(+) = hydrogencarbonate + 2 NH4(+). It functions in the pathway nitrogen metabolism; urea degradation; CO(2) and NH(3) from urea (urease route): step 1/1. The sequence is that of Urease subunit alpha from Magnetococcus marinus (strain ATCC BAA-1437 / JCM 17883 / MC-1).